A 355-amino-acid polypeptide reads, in one-letter code: Transcription factor TGAL9 (355 aa).

2 disordered regions span residues 83-104 (FPSQ…MAAI) and 118-188 (GSSK…DAKT). A compositionally biased stretch (low complexity) spans 118-134 (GSSKRPPAAAAAGGQPS). Residues 135-144 (RLNNPADQPS) are compositionally biased toward polar residues. 2 stretches are compositionally biased toward basic and acidic residues: residues 148 to 159 (KDGKAAVVKKEG) and 176 to 188 (SEHE…DAKT). One can recognise a bZIP domain in the interval 185–230 (DAKTLRRLAQNREAARKSRLRKKAYIQNLETSRIRLSQLEQELVQR). Residues 187-207 (KTLRRLAQNREAARKSRLRKK) form a basic motif region. A leucine-zipper region spans residues 213–227 (LETSRIRLSQLEQEL). A DOG1 domain is found at 254-355 (AAWFDGEYAR…RPSELIKVST (102 aa)).

This sequence belongs to the bZIP family. Interacts with NPR5/NH4, NH5.1 and NH5.2.

It localises to the nucleus. Functionally, transcriptional regulator involved in defense response. This chain is Transcription factor TGAL9, found in Oryza sativa subsp. japonica (Rice).